We begin with the raw amino-acid sequence, 394 residues long: Xylose isomerase (394 aa).

Residues histidine 54 and aspartate 57 contribute to the active site. Mg(2+)-binding residues include glutamate 180, glutamate 216, histidine 219, aspartate 244, aspartate 254, aspartate 256, and aspartate 285. A disordered region spans residues 370 to 394 (VRTPRPAGDGPPAGRARLTVAPRKR). Residues 373-386 (PRPAGDGPPAGRAR) are compositionally biased toward low complexity.

This sequence belongs to the xylose isomerase family. Homotetramer. It depends on Mg(2+) as a cofactor.

The protein resides in the cytoplasm. The catalysed reaction is alpha-D-xylose = alpha-D-xylulofuranose. Involved in D-xylose catabolism. The chain is Xylose isomerase (xylA) from Streptomyces rochei (Streptomyces parvullus).